Consider the following 69-residue polypeptide: Cold shock protein CapB (69 aa).

A CSD domain is found at 7–66 (GTVKWFNDEKGFGFITPQSGDDLFVHFKAIQSDGFKSLKEGQQVSFIATRGQKGMQAEEV).

It localises to the cytoplasm. Affects cell viability at low temperatures. In Pseudomonas fragi, this protein is Cold shock protein CapB (capB).